Consider the following 1093-residue polypeptide: Electroneutral sodium bicarbonate exchanger 1 (1093 aa).

2 disordered regions span residues 1–25 (MPAA…AVVD) and 55–95 (PLGR…HDTP). Over 1–478 (MPAAGSNEPD…DYRDALSLQC (478 aa)) the chain is Extracellular. Residues 59–77 (QSHRHHRTHGQKHRRRGRG) are compositionally biased toward basic residues. Positions 167 and 169 each coordinate Zn(2+). The short motif at 340-344 (LFILL) is the VTVLP; mediates dimerization element. A helical membrane pass occupies residues 479–499 (LASFLFLYCACMSPVITFGGL). The Cytoplasmic segment spans residues 500 to 523 (LGEATEGRISAIESLFGASMTGIA). The chain crosses the membrane as a helical span at residues 524–544 (YSLFAGQALTILGSTGPVLVF). Residues 545–565 (EKILFKFCKDYALSYLSLRAC) are Extracellular-facing. A helical transmembrane segment spans residues 566–586 (IGLWTAFLCIVLVATDASSLV). At 587 to 595 (CYITRFTEE) the chain is on the cytoplasmic side. A helical membrane pass occupies residues 596–616 (AFASLICIIFIYEAIEKLIHL). Topologically, residues 617–687 (AETYPIHMHS…EFMGSACGHH (71 aa)) are extracellular. 2 disulfide bridges follow: C636–C684 and C638–C672. Residue N646 is glycosylated (N-linked (GlcNAc) asparagine). Residues 688–708 (GPYTPDVLFWSCILFFTTFIL) traverse the membrane as a helical segment. Over 709-731 (SSTLKTFKTSRYFPTRVRSMVSD) the chain is Cytoplasmic. The helical transmembrane segment at 732–752 (FAVFLTIFTMVIIDFLIGVPS) threads the bilayer. The Extracellular portion of the chain corresponds to 753-778 (PKLQVPSVFKPTRDDRGWIINPIGPN). Residues 779-799 (PWWTVIAAIIPALLCTILIFM) form a helical membrane-spanning segment. Residues 800-824 (DQQITAVIINRKEHKLKKGCGYHLD) lie on the Cytoplasmic side of the membrane. A helical membrane pass occupies residues 825–845 (LLMVAIMLGVCSIMGLPWFVA). Over 846–881 (ATVLSITHVNSLKLESECSAPGEQPKFLGIREQRVT) the chain is Extracellular. Residues 882-902 (GLMIFVLMGCSVFMTAILKFI) traverse the membrane as a helical segment. The Cytoplasmic portion of the chain corresponds to 903-904 (PM). Residues 905 to 925 (PVLYGVFLYMGVSSLQGIQFF) traverse the membrane as a helical segment. Residues 926-962 (DRLKLFGMPAKHQPDFIYLRHVPLRKVHLFTLIQLTC) lie on the Extracellular side of the membrane. A helical membrane pass occupies residues 963-983 (LVLLWVIKASPAAIVFPMMVL). Topologically, residues 984–1093 (ALVFVRKVMD…GNAKEKSLFN (110 aa)) are cytoplasmic. Positions 1010–1036 (ESKKKKLDDAKKKAKEEEEAEKMLEIG) form a coiled coil.

It belongs to the anion exchanger (TC 2.A.31) family. As to quaternary structure, homodimer. As to expression, expressed in the pyramidal cells of the hippocampus (at protein level). Highly expressed in all major regions of the brain, spinal column and in testis, and moderate levels in trachea, thyroid and medulla region of kidney. Low expression levels observed in pancreas and kidney cortex. Expressed in the brain. In terms of tissue distribution, expressed in the brain, heart and kidney.

The protein resides in the apical cell membrane. Its subcellular location is the basolateral cell membrane. The protein localises to the cytoplasmic vesicle. It is found in the secretory vesicle. It localises to the synaptic vesicle membrane. The protein resides in the cell membrane. The enzyme catalyses 2 hydrogencarbonate(out) + chloride(in) + Na(+)(out) = 2 hydrogencarbonate(in) + chloride(out) + Na(+)(in). With respect to regulation, activity is inhibited by 4,4'-Di-isothiocyanatostilbene-2,2'-disulfonic acid (DIDS - an inhibitor of several anion channels and transporters). Its activity is regulated as follows. Activity is inhibited by 4,4'-Di-isothiocyanatostilbene-2,2'-disulfonic acid (DIDS - an inhibitor of several anion channels and transporters). Zinc-binding negatively regulates its activity. In terms of biological role, mediates electroneutral sodium- and carbonate-dependent chloride-HCO3(-) exchange with a Na(+):HCO3(-) stoichiometry of 2:1. Plays a major role in pH regulation in neurons. Mediates sodium reabsorption in the renal cortical collecting ducts. This chain is Electroneutral sodium bicarbonate exchanger 1, found in Homo sapiens (Human).